The chain runs to 107 residues: Bombesin (107 aa).

The signal sequence occupies residues 1–26; the sequence is MSAIPLNRILPLGFLLIFSFISLSSC. A propeptide spanning residues 27–41 is cleaved from the precursor; that stretch reads MEFVEDPNNQGGLNL. Gln42 carries the pyrrolidone carboxylic acid modification. Met55 is subject to Methionine amide. Residues 56–107 constitute a propeptide that is removed on maturation; it reads GKKSLQDTDFEEMESFAKRNVENMKAESERELRHAQLVVRNILEQYLKNMQN.

As to expression, expressed by the skin glands.

It localises to the secreted. In terms of biological role, stimulates smooth muscle contraction. Role in induction of hypothermia, stimulation of DNA replication and release of many gastrointestinal hormones. Possesses insulin-releasing activity. This chain is Bombesin, found in Bombina variegata (Yellow-bellied toad).